The chain runs to 268 residues: MTSSEKNSTGLAGKTCLVTGGAGGLGKAVTAAFLDAGANVVICDINAKRIESTLAELRTRGGNLTAVTADITDHDQVLSLFDDIAGRFGTLDVLVNNAAVMDRFDPVGDIELDLWDNVLAVNLTAPLQLSKFAVRSMLSKPEPAGCIINIASGAATAGWLAGTAYTASKHGLVGLTKSTAAFYGPKGIRCNALIMGVMVGTHMHEAFLDGCHKEGRQKVEEIFSGHRPQTCKVDDVAGICLSLASGPGWGTVNGALIAVDNGWTSVVG.

Positions 18, 70, 97, 131, 165, and 169 each coordinate NADP(+). The Proton acceptor role is filled by Tyr165. The Lowers pKa of active site Tyr role is filled by Lys169.

The protein belongs to the short-chain dehydrogenases/reductases (SDR) family.

It participates in secondary metabolite biosynthesis; terpenoid biosynthesis. Functionally, short chain dehydrogenase/reductase; part of the gene cluster that mediates the biosynthesis of the diterpenoid pyrones higginsianins A and B. The first step of the pathway is the synthesis of the alpha-pyrone moiety by the polyketide synthase dpchA via condensation of one acetyl-CoA starter unit with 3 malonyl-CoA units and 2 methylations. The alpha-pyrone is then combined with geranylgeranyl pyrophosphate (GGPP) formed by the GGPP synthase dpchD through the action of the prenyltransferase dpchC to yield a linear alpha-pyrone diterpenoid. Subsequent steps in the diterpenoid pyrone biosynthetic pathway involve the decalin core formation, which is initiated by the epoxidation of the C10-C11 olefin by the FAD-dependent oxidoreductase dpchE, and is followed by a cyclization cascade catalyzed by the terpene cyclase dpchB. The short chain dehydrogenase/reductase dpchG then oxidizes the 8S hydroxy group to a ketone and the short chain dehydrogenase/reductase dpchH reduces the ketone to the 8R hydroxy group to yield higginsianin B. Finally, the FAD-dependent oxidoreductase dpchF converts higginsianin B into higginsianin A. The sequence is that of Short chain dehydrogenase/reductase dpchG from Colletotrichum higginsianum (strain IMI 349063) (Crucifer anthracnose fungus).